Reading from the N-terminus, the 786-residue chain is Endonuclease MutS2 (786 aa).

Position 335-342 (335-342 (GPNTGGKT)) interacts with ATP. The disordered stretch occupies residues 529-549 (SQKNAERERKEAEEHRKQSEK). The region spanning 711–786 (LDLRGERYED…GLGVTVVELK (76 aa)) is the Smr domain.

Belongs to the DNA mismatch repair MutS family. MutS2 subfamily. As to quaternary structure, homodimer. Binds to stalled ribosomes, contacting rRNA.

In terms of biological role, endonuclease that is involved in the suppression of homologous recombination and thus may have a key role in the control of bacterial genetic diversity. Acts as a ribosome collision sensor, splitting the ribosome into its 2 subunits. Detects stalled/collided 70S ribosomes which it binds and splits by an ATP-hydrolysis driven conformational change. Acts upstream of the ribosome quality control system (RQC), a ribosome-associated complex that mediates the extraction of incompletely synthesized nascent chains from stalled ribosomes and their subsequent degradation. Probably generates substrates for RQC. This Bacillus mycoides (strain KBAB4) (Bacillus weihenstephanensis) protein is Endonuclease MutS2.